The chain runs to 287 residues: Neuferricin homolog (287 aa).

An N-terminal signal peptide occupies residues 1–22 (MFGLLRHLFKFQFLFVVAAVLG). Residues 61-146 (GTLFTPAELA…KPDDLIGLAG (86 aa)) enclose the Cytochrome b5 heme-binding domain. Residues 175–204 (YHHKFLELLEQARDAKRQVEELRARYPGCN) are a coiled coil.

It belongs to the cytochrome b5 family. MAPR subfamily.

Its subcellular location is the secreted. Its function is as follows. Heme-binding protein. The protein is Neuferricin homolog of Drosophila melanogaster (Fruit fly).